A 433-amino-acid chain; its full sequence is N-lysine methyltransferase SMYD2 (433 aa).

The SET domain maps to 7–241; it reads GGLERFCSAG…PGDEVFTSYI (235 aa). Residue 17-19 participates in S-adenosyl-L-methionine binding; it reads KGR. The Zn(2+) site is built by Cys52, Cys55, Cys65, Cys68, Cys74, Cys78, His86, and Cys90. The MYND-type zinc finger occupies 52 to 90; it reads CECCFARKEGLSKCGRCKQAFYCDVECQKEDWPLHKLEC. Residues His137, 206-207, and 258-260 each bind S-adenosyl-L-methionine; these read NH and YFF. Phosphoserine is present on Ser283.

It belongs to the class V-like SAM-binding methyltransferase superfamily. Interacts (via MYND-type zinc finger) with EPB41L3. Interacts (via SET domain) with p53/TP53. Interacts with RB1 and HSP90AA1. Interacts with RNA polymerase II and HELZ. Interacts with SIN3A and HDAC1. Highly expressed in heart, skeletal muscle and brain tissue. During cardiac development, it is differentially expressed with highest expression in the neonatal heart while very low expression is detected at 12.5 dpc and adult. Specifically expressed in cardiomyocytes (at protein level).

The protein localises to the cytoplasm. The protein resides in the cytosol. It is found in the nucleus. The enzyme catalyses L-lysyl(4)-[histone H3] + 3 S-adenosyl-L-methionine = N(6),N(6),N(6)-trimethyl-L-lysyl(4)-[histone H3] + 3 S-adenosyl-L-homocysteine + 3 H(+). It carries out the reaction L-lysyl-[protein] + S-adenosyl-L-methionine = N(6)-methyl-L-lysyl-[protein] + S-adenosyl-L-homocysteine + H(+). Functionally, protein-lysine N-methyltransferase that methylates both histones and non-histone proteins, including p53/TP53 and RB1. Specifically trimethylates histone H3 'Lys-4' (H3K4me3) in vivo. The activity requires interaction with HSP90alpha. Shows even higher methyltransferase activity on p53/TP53. Monomethylates 'Lys-370' of p53/TP53, leading to decreased DNA-binding activity and subsequent transcriptional regulation activity of p53/TP53. Monomethylates RB1 at 'Lys-860'. In Mus musculus (Mouse), this protein is N-lysine methyltransferase SMYD2 (Smyd2).